The chain runs to 98 residues: Putative defensin-like protein 239 (98 aa).

The N-terminal stretch at 1 to 23 is a signal peptide; that stretch reads MRYTTSFIGLCFLIFLLKNLVNG. 4 disulfide bridges follow: cysteine 29-cysteine 89, cysteine 39-cysteine 69, cysteine 47-cysteine 86, and cysteine 67-cysteine 88.

This sequence belongs to the DEFL family.

It is found in the secreted. The protein is Putative defensin-like protein 239 (SCRL17) of Arabidopsis thaliana (Mouse-ear cress).